The chain runs to 247 residues: 3-deoxy-manno-octulosonate cytidylyltransferase (247 aa).

Belongs to the KdsB family.

It localises to the cytoplasm. It catalyses the reaction 3-deoxy-alpha-D-manno-oct-2-ulosonate + CTP = CMP-3-deoxy-beta-D-manno-octulosonate + diphosphate. The protein operates within nucleotide-sugar biosynthesis; CMP-3-deoxy-D-manno-octulosonate biosynthesis; CMP-3-deoxy-D-manno-octulosonate from 3-deoxy-D-manno-octulosonate and CTP: step 1/1. It functions in the pathway bacterial outer membrane biogenesis; lipopolysaccharide biosynthesis. Functionally, activates KDO (a required 8-carbon sugar) for incorporation into bacterial lipopolysaccharide in Gram-negative bacteria. This chain is 3-deoxy-manno-octulosonate cytidylyltransferase, found in Afipia carboxidovorans (strain ATCC 49405 / DSM 1227 / KCTC 32145 / OM5) (Oligotropha carboxidovorans).